Here is a 680-residue protein sequence, read N- to C-terminus: Structure-specific endonuclease subunit SLX4 (680 aa).

3 disordered regions span residues 15–92, 141–183, and 450–490; these read EVAK…EPVV, ESSS…STQQ, and LGSG…ATRL. The span at 22 to 33 shows a compositional bias: acidic residues; sequence DSDEPIIDEDDL. The segment covering 60 to 86 has biased composition (basic and acidic residues); that stretch reads NNSKDTFKETPLELVDKEEAIEDKAPN. The span at 156–174 shows a compositional bias: basic residues; that stretch reads LKSKKITKPKLTKTSKRTK. A compositionally biased stretch (polar residues) spans 473 to 490; it reads TVISRSPQSTRTPQATRL.

The protein belongs to the SLX4 family. In terms of assembly, forms a heterodimer with SLX1. Phosphorylated in response to DNA damage.

The protein localises to the nucleus. Regulatory subunit of the SLX1-SLX4 structure-specific endonuclease that resolves DNA secondary structures generated during DNA repair and recombination. Has endonuclease activity towards branched DNA substrates, introducing single-strand cuts in duplex DNA close to junctions with ss-DNA. This chain is Structure-specific endonuclease subunit SLX4, found in Vanderwaltozyma polyspora (strain ATCC 22028 / DSM 70294 / BCRC 21397 / CBS 2163 / NBRC 10782 / NRRL Y-8283 / UCD 57-17) (Kluyveromyces polysporus).